Consider the following 60-residue polypeptide: Large ribosomal subunit protein bL32 (60 aa).

Residues 1–23 (MAKHPVPKKKTSKARRDARRSHH) show a composition bias toward basic residues. Positions 1–28 (MAKHPVPKKKTSKARRDARRSHHALTPP) are disordered.

Belongs to the bacterial ribosomal protein bL32 family. In terms of assembly, part of the 50S ribosomal subunit.

In terms of biological role, found on the solvent side of the large subunit. The polypeptide is Large ribosomal subunit protein bL32 (rpmF) (Thermus thermophilus (strain ATCC BAA-163 / DSM 7039 / HB27)).